The primary structure comprises 345 residues: GTPase Obg (345 aa).

The Obg domain maps to 1–158; that stretch reads MFIDSVKITL…RLVRLELKLI (158 aa). An OBG-type G domain is found at 159 to 339; that stretch reads ADVGLVGFPN…LKFMLLEEIK (181 aa). Residues 165–172, 190–194, 212–215, 280–283, and 320–322 contribute to the GTP site; these read GFPNVGKS, FTTLT, DIPG, SKSD, and SSL. 2 residues coordinate Mg(2+): Ser-172 and Thr-192.

It belongs to the TRAFAC class OBG-HflX-like GTPase superfamily. OBG GTPase family. Monomer. Mg(2+) is required as a cofactor.

It is found in the cytoplasm. Its function is as follows. An essential GTPase which binds GTP, GDP and possibly (p)ppGpp with moderate affinity, with high nucleotide exchange rates and a fairly low GTP hydrolysis rate. Plays a role in control of the cell cycle, stress response, ribosome biogenesis and in those bacteria that undergo differentiation, in morphogenesis control. The sequence is that of GTPase Obg from Campylobacter jejuni subsp. jejuni serotype O:6 (strain 81116 / NCTC 11828).